The sequence spans 419 residues: Esterase FrsA (419 aa).

Belongs to the FrsA family.

It catalyses the reaction a carboxylic ester + H2O = an alcohol + a carboxylate + H(+). Functionally, catalyzes the hydrolysis of esters. In Photobacterium profundum (strain SS9), this protein is Esterase FrsA.